The primary structure comprises 124 residues: Large-conductance mechanosensitive channel (124 aa).

The next 3 helical transmembrane spans lie at 14-34, 37-57, and 67-87; these read VIDL…VQSL, NLIN…NLVF, and GSFI…FLIV.

The protein belongs to the MscL family. In terms of assembly, homopentamer.

The protein localises to the cell membrane. Functionally, channel that opens in response to stretch forces in the membrane lipid bilayer. May participate in the regulation of osmotic pressure changes within the cell. This Lactobacillus acidophilus (strain ATCC 700396 / NCK56 / N2 / NCFM) protein is Large-conductance mechanosensitive channel.